The sequence spans 273 residues: Undecaprenyl-diphosphatase (273 aa).

7 consecutive transmembrane segments (helical) span residues 4-24 (LILL…FLPI), 43-63 (KAKV…CWEY), 82-102 (FVIN…LFIK), 108-128 (LFHP…ILWA), 183-203 (AAEF…FYDV), 217-237 (MFAT…RGFI), and 248-268 (FAWY…SGLV).

This sequence belongs to the UppP family.

The protein resides in the cell inner membrane. The enzyme catalyses di-trans,octa-cis-undecaprenyl diphosphate + H2O = di-trans,octa-cis-undecaprenyl phosphate + phosphate + H(+). Catalyzes the dephosphorylation of undecaprenyl diphosphate (UPP). Confers resistance to bacitracin. This Nitrosomonas europaea (strain ATCC 19718 / CIP 103999 / KCTC 2705 / NBRC 14298) protein is Undecaprenyl-diphosphatase.